A 190-amino-acid chain; its full sequence is Nucleoside triphosphate pyrophosphatase (190 aa).

The active-site Proton acceptor is Asp-69.

Belongs to the Maf family. It depends on a divalent metal cation as a cofactor.

Its subcellular location is the cytoplasm. The catalysed reaction is a ribonucleoside 5'-triphosphate + H2O = a ribonucleoside 5'-phosphate + diphosphate + H(+). It carries out the reaction a 2'-deoxyribonucleoside 5'-triphosphate + H2O = a 2'-deoxyribonucleoside 5'-phosphate + diphosphate + H(+). Nucleoside triphosphate pyrophosphatase. May have a dual role in cell division arrest and in preventing the incorporation of modified nucleotides into cellular nucleic acids. The protein is Nucleoside triphosphate pyrophosphatase of Helicobacter pylori (strain J99 / ATCC 700824) (Campylobacter pylori J99).